The primary structure comprises 299 residues: Sulfate adenylyltransferase subunit 2 (299 aa).

The protein belongs to the PAPS reductase family. CysD subfamily. In terms of assembly, sulfate-activating enzymes, NodP and NodQ, may be physically associated.

The enzyme catalyses sulfate + ATP + H(+) = adenosine 5'-phosphosulfate + diphosphate. In terms of biological role, proposed to provide activated sulfate for transfer to nod factor. The sequence is that of Sulfate adenylyltransferase subunit 2 (nodP) from Rhizobium tropici.